The primary structure comprises 449 residues: Glucose-6-phosphate isomerase (449 aa).

The Proton donor role is filled by Glu291. Residues His312 and Lys426 contribute to the active site.

The protein belongs to the GPI family.

It localises to the cytoplasm. It carries out the reaction alpha-D-glucose 6-phosphate = beta-D-fructose 6-phosphate. It functions in the pathway carbohydrate biosynthesis; gluconeogenesis. The protein operates within carbohydrate degradation; glycolysis; D-glyceraldehyde 3-phosphate and glycerone phosphate from D-glucose: step 2/4. In terms of biological role, catalyzes the reversible isomerization of glucose-6-phosphate to fructose-6-phosphate. In Streptococcus gordonii (strain Challis / ATCC 35105 / BCRC 15272 / CH1 / DL1 / V288), this protein is Glucose-6-phosphate isomerase.